A 473-amino-acid chain; its full sequence is Serine palmitoyltransferase 1 (473 aa).

Residues 1–15 (MAMAAEQWVLVEMVQ) lie on the Lumenal side of the membrane. An interaction with SPTLC2 region spans residues 1–66 (MAMAAEQWVL…KEELIEEWQP (66 aa)). Residues 16–36 (ALYEAPAYHLILEGILILWII) form a helical membrane-spanning segment. The Cytoplasmic segment spans residues 37–473 (RLVFSKTYKL…IREAAQAVLL (437 aa)). A Phosphotyrosine; by ABL modification is found at tyrosine 164.

Belongs to the class-II pyridoxal-phosphate-dependent aminotransferase family. Component of the serine palmitoyltransferase (SPT) complex, which is also composed of SPTLC2 or SPTLC3 and SPTSSA or SPTSSB. The heterodimer with SPTLC2 or SPTLC3 forms the catalytic core of the enzyme, while SPTSSA or SPTSSB subunits determine substrate specificity. SPT also interacts with ORMDL proteins, especially ORMDL3, which negatively regulate SPT activity in the presence of ceramides. Forms dimers of heterodimers with SPTLC2. Interacts with RTN4. It depends on pyridoxal 5'-phosphate as a cofactor. In terms of processing, phosphorylation at Tyr-164 inhibits activity and promotes cell survival.

The protein resides in the endoplasmic reticulum membrane. The enzyme catalyses L-serine + hexadecanoyl-CoA + H(+) = 3-oxosphinganine + CO2 + CoA. It carries out the reaction octadecanoyl-CoA + L-serine + H(+) = 3-oxoeicosasphinganine + CO2 + CoA. The catalysed reaction is tetradecanoyl-CoA + L-serine + H(+) = 3-oxohexadecasphinganine + CO2 + CoA. It catalyses the reaction dodecanoyl-CoA + L-serine + H(+) = 3-oxotetradecasphinganine + CO2 + CoA. Its pathway is lipid metabolism; sphingolipid metabolism. Its activity is regulated as follows. SPT complex catalytic activity is negatively regulated by ORMDL proteins, including ORMDL3, in the presence of ceramides. This mechanism allows to maintain ceramide levels at sufficient concentrations for the production of complex sphingolipids, but which prevents the accumulation of ceramides to levels that trigger apoptosis. Its function is as follows. Component of the serine palmitoyltransferase multisubunit enzyme (SPT) that catalyzes the initial and rate-limiting step in sphingolipid biosynthesis by condensing L-serine and activated acyl-CoA (most commonly palmitoyl-CoA) to form long-chain bases. The SPT complex is also composed of SPTLC2 or SPTLC3 and SPTSSA or SPTSSB. Within this complex, the heterodimer with SPTLC2 or SPTLC3 forms the catalytic core. The composition of the serine palmitoyltransferase (SPT) complex determines the substrate preference. The SPTLC1-SPTLC2-SPTSSA complex shows a strong preference for C16-CoA substrate, while the SPTLC1-SPTLC3-SPTSSA isozyme uses both C14-CoA and C16-CoA as substrates, with a slight preference for C14-CoA. The SPTLC1-SPTLC2-SPTSSB complex shows a strong preference for C18-CoA substrate, while the SPTLC1-SPTLC3-SPTSSB isozyme displays an ability to use a broader range of acyl-CoAs, without apparent preference. Required for adipocyte cell viability and metabolic homeostasis. The polypeptide is Serine palmitoyltransferase 1 (SPTLC1) (Cricetulus griseus (Chinese hamster)).